Here is a 355-residue protein sequence, read N- to C-terminus: Green-sensitive opsin (355 aa).

Topologically, residues 1–36 (MNGTEGINFYVPMSNKTGVVRSPFEYPQYYLAEPWK) are extracellular. N-linked (GlcNAc...) asparagine glycosylation is found at Asn2 and Asn15. A helical membrane pass occupies residues 37–61 (YRLVCCYIFFLISTGLPINLLTLLV). Over 62 to 73 (TFKHKKLRQPLN) the chain is Cytoplasmic. Residues 74–99 (YILVNLAVADLFMACFGFTVTFYTAW) traverse the membrane as a helical segment. Topologically, residues 100–113 (NGYFVFGPVGCAVE) are extracellular. The cysteines at positions 110 and 187 are disulfide-linked. Residues 114 to 133 (GFFATLGGQVALWSLVVLAI) traverse the membrane as a helical segment. Over 134-152 (ERYIVVCKPMGNFRFSATH) the chain is Cytoplasmic. The chain crosses the membrane as a helical span at residues 153 to 176 (AMMGIAFTWVMAFSCAAPPLFGWS). At 177–202 (RYMPEGMQCSCGPDYYTHNPDYHNES) the chain is on the extracellular side. Residues 203 to 230 (YVLYMFVIHFIIPVVVIFFSYGRLICKV) traverse the membrane as a helical segment. The Cytoplasmic segment spans residues 231 to 252 (REAAAQQQESATTQKAEKEVTR). The helical transmembrane segment at 253 to 276 (MVILMVLGFMLAWTPYAVVAFWIF) threads the bilayer. At 277–284 (TNKGADFT) the chain is on the extracellular side. Residues 285-309 (ATLMAVPAFFSKSSSLYNPIIYVLM) traverse the membrane as a helical segment. Lys296 carries the N6-(retinylidene)lysine modification. The Cytoplasmic segment spans residues 310–355 (NKQFRNCMITTICCGKNPFGDEDVSSTVSQSKTEVSSVSSSQVSPA).

The protein belongs to the G-protein coupled receptor 1 family. Opsin subfamily. Phosphorylated on some or all of the serine and threonine residues present in the C-terminal region. In terms of tissue distribution, the color pigments are found in the cone photoreceptor cells.

The protein localises to the membrane. In terms of biological role, visual pigments are the light-absorbing molecules that mediate vision. They consist of an apoprotein, opsin, covalently linked to cis-retinal. The polypeptide is Green-sensitive opsin (PRA1) (Gallus gallus (Chicken)).